The following is a 398-amino-acid chain: Succinate--CoA ligase [ADP-forming] subunit beta (398 aa).

In terms of domain architecture, ATP-grasp spans 9 to 254; that stretch reads KAVLREFGVS…ETEEDAKEIE (246 aa). ATP is bound by residues lysine 46, 53–55, glutamate 109, alanine 112, and glutamate 117; that span reads GRG. Mg(2+) is bound by residues asparagine 209 and aspartate 223. Residues asparagine 274 and 331-333 each bind substrate; that span reads GIM.

It belongs to the succinate/malate CoA ligase beta subunit family. As to quaternary structure, heterotetramer of two alpha and two beta subunits. Mg(2+) is required as a cofactor.

The catalysed reaction is succinate + ATP + CoA = succinyl-CoA + ADP + phosphate. The enzyme catalyses GTP + succinate + CoA = succinyl-CoA + GDP + phosphate. Its pathway is carbohydrate metabolism; tricarboxylic acid cycle; succinate from succinyl-CoA (ligase route): step 1/1. In terms of biological role, succinyl-CoA synthetase functions in the citric acid cycle (TCA), coupling the hydrolysis of succinyl-CoA to the synthesis of either ATP or GTP and thus represents the only step of substrate-level phosphorylation in the TCA. The beta subunit provides nucleotide specificity of the enzyme and binds the substrate succinate, while the binding sites for coenzyme A and phosphate are found in the alpha subunit. This is Succinate--CoA ligase [ADP-forming] subunit beta from Afipia carboxidovorans (strain ATCC 49405 / DSM 1227 / KCTC 32145 / OM5) (Oligotropha carboxidovorans).